We begin with the raw amino-acid sequence, 93 residues long: Small ribosomal subunit protein bS6 (93 aa).

It belongs to the bacterial ribosomal protein bS6 family.

In terms of biological role, binds together with bS18 to 16S ribosomal RNA. The protein is Small ribosomal subunit protein bS6 (rpsF) of Treponema pallidum (strain Nichols).